Reading from the N-terminus, the 428-residue chain is Serine--tRNA ligase (428 aa).

231 to 233 provides a ligand contact to L-serine; that stretch reads TAE. Residue 262-264 participates in ATP binding; that stretch reads RSE. L-serine is bound at residue Glu-285. 349–352 contributes to the ATP binding site; the sequence is EISS. L-serine is bound at residue Ser-385.

Belongs to the class-II aminoacyl-tRNA synthetase family. Type-1 seryl-tRNA synthetase subfamily. As to quaternary structure, homodimer. The tRNA molecule binds across the dimer.

It is found in the cytoplasm. The enzyme catalyses tRNA(Ser) + L-serine + ATP = L-seryl-tRNA(Ser) + AMP + diphosphate + H(+). It carries out the reaction tRNA(Sec) + L-serine + ATP = L-seryl-tRNA(Sec) + AMP + diphosphate + H(+). It participates in aminoacyl-tRNA biosynthesis; selenocysteinyl-tRNA(Sec) biosynthesis; L-seryl-tRNA(Sec) from L-serine and tRNA(Sec): step 1/1. Its function is as follows. Catalyzes the attachment of serine to tRNA(Ser). Is also able to aminoacylate tRNA(Sec) with serine, to form the misacylated tRNA L-seryl-tRNA(Sec), which will be further converted into selenocysteinyl-tRNA(Sec). This is Serine--tRNA ligase from Staphylococcus haemolyticus (strain JCSC1435).